We begin with the raw amino-acid sequence, 152 residues long: Smith-Magenis syndrome chromosomal region candidate gene 5 protein homolog (152 aa).

The tract at residues 41–77 (TPCAGPSSQAPPQPPQASPPAAPDHSRTPSLLASSHS) is disordered. Positions 49–62 (QAPPQPPQASPPAA) are enriched in pro residues.

The chain is Smith-Magenis syndrome chromosomal region candidate gene 5 protein homolog (SMCR5) from Macaca fascicularis (Crab-eating macaque).